A 568-amino-acid chain; its full sequence is 2-succinyl-5-enolpyruvyl-6-hydroxy-3-cyclohexene-1-carboxylate synthase (568 aa).

This sequence belongs to the TPP enzyme family. MenD subfamily. Homodimer. The cofactor is Mg(2+). Requires Mn(2+) as cofactor. Thiamine diphosphate is required as a cofactor.

It carries out the reaction isochorismate + 2-oxoglutarate + H(+) = 5-enolpyruvoyl-6-hydroxy-2-succinyl-cyclohex-3-ene-1-carboxylate + CO2. It participates in quinol/quinone metabolism; 1,4-dihydroxy-2-naphthoate biosynthesis; 1,4-dihydroxy-2-naphthoate from chorismate: step 2/7. Its pathway is cofactor biosynthesis; phylloquinone biosynthesis. Functionally, catalyzes the thiamine diphosphate-dependent decarboxylation of 2-oxoglutarate and the subsequent addition of the resulting succinic semialdehyde-thiamine pyrophosphate anion to isochorismate to yield 2-succinyl-5-enolpyruvyl-6-hydroxy-3-cyclohexene-1-carboxylate (SEPHCHC). The chain is 2-succinyl-5-enolpyruvyl-6-hydroxy-3-cyclohexene-1-carboxylate synthase from Synechococcus sp. (strain CC9902).